Reading from the N-terminus, the 339-residue chain is D-erythrose-4-phosphate dehydrogenase (339 aa).

Position 11-12 (11-12) interacts with NAD(+); that stretch reads RI. Residues 153-155, arginine 199, 212-213, and arginine 235 each bind substrate; these read SCT and TK. Cysteine 154 acts as the Nucleophile in catalysis. NAD(+) is bound at residue asparagine 317.

Belongs to the glyceraldehyde-3-phosphate dehydrogenase family. Epd subfamily. In terms of assembly, homotetramer.

It is found in the cytoplasm. It carries out the reaction D-erythrose 4-phosphate + NAD(+) + H2O = 4-phospho-D-erythronate + NADH + 2 H(+). Its pathway is cofactor biosynthesis; pyridoxine 5'-phosphate biosynthesis; pyridoxine 5'-phosphate from D-erythrose 4-phosphate: step 1/5. Catalyzes the NAD-dependent conversion of D-erythrose 4-phosphate to 4-phosphoerythronate. In Shewanella halifaxensis (strain HAW-EB4), this protein is D-erythrose-4-phosphate dehydrogenase.